The following is a 160-amino-acid chain: Transcription elongation factor GreB (160 aa).

This sequence belongs to the GreA/GreB family. GreB subfamily.

In terms of biological role, necessary for efficient RNA polymerase transcription elongation past template-encoded arresting sites. The arresting sites in DNA have the property of trapping a certain fraction of elongating RNA polymerases that pass through, resulting in locked ternary complexes. Cleavage of the nascent transcript by cleavage factors such as GreA or GreB allows the resumption of elongation from the new 3'terminus. GreB releases sequences of up to 9 nucleotides in length. The polypeptide is Transcription elongation factor GreB (Vibrio vulnificus (strain CMCP6)).